The primary structure comprises 477 residues: UDP-N-acetylmuramate--L-alanine ligase (477 aa).

118 to 124 (GTHGKTS) serves as a coordination point for ATP.

It belongs to the MurCDEF family.

It is found in the cytoplasm. The enzyme catalyses UDP-N-acetyl-alpha-D-muramate + L-alanine + ATP = UDP-N-acetyl-alpha-D-muramoyl-L-alanine + ADP + phosphate + H(+). Its pathway is cell wall biogenesis; peptidoglycan biosynthesis. Its function is as follows. Cell wall formation. This Corynebacterium diphtheriae (strain ATCC 700971 / NCTC 13129 / Biotype gravis) protein is UDP-N-acetylmuramate--L-alanine ligase.